The chain runs to 343 residues: Sodium/bile acid cotransporter 7-B (343 aa).

The Cytoplasmic segment spans residues Met-1–Lys-9. The helical transmembrane segment at Glu-10–Gly-30 threads the bilayer. At Glu-31–Lys-37 the chain is on the extracellular side. Residues Pro-38 to Leu-58 form a helical membrane-spanning segment. At Lys-59 to Lys-71 the chain is on the cytoplasmic side. Residues Leu-72–Leu-92 traverse the membrane as a helical segment. At Gln-93 to Pro-116 the chain is on the extracellular side. Residues Pro-117 to Phe-137 traverse the membrane as a helical segment. Residue Asn-138 is a topological domain, cytoplasmic. A helical membrane pass occupies residues Ser-139–Gly-159. The Extracellular segment spans residues Ser-160 to Ser-163. A helical transmembrane segment spans residues Val-164–Gly-184. Residues Gln-185 to Pro-201 lie on the Cytoplasmic side of the membrane. Residues Phe-202 to Phe-222 traverse the membrane as a helical segment. At Ser-223 to Leu-234 the chain is on the extracellular side. Residues Val-235 to Phe-255 form a helical membrane-spanning segment. Topologically, residues Ser-256 to Ala-270 are cytoplasmic. A helical transmembrane segment spans residues Ile-271–Phe-291. The Extracellular portion of the chain corresponds to Ala-292–Ser-298. A helical membrane pass occupies residues Leu-299–Val-319. Residues Pro-320–Leu-343 are Cytoplasmic-facing.

The protein belongs to the bile acid:sodium symporter (BASS) (TC 2.A.28) family.

The protein localises to the cell membrane. Its subcellular location is the endoplasmic reticulum membrane. It is found in the golgi apparatus membrane. In terms of biological role, involved in teeth and skeletal development. Has an essential role in the biosynthesis and trafficking of glycosaminoglycans and glycoproteins to produce a proper functioning extracellular matrix. Required for extracellular matrix mineralization. Also involved in the regulation of cellular calcium homeostasis. Does not show transport activity towards bile acids or steroid sulfates. The sequence is that of Sodium/bile acid cotransporter 7-B (slc10a7-b) from Xenopus laevis (African clawed frog).